The sequence spans 231 residues: tRNA (guanine-N(1)-)-methyltransferase (231 aa).

Residues Gly109 and 133–138 (IGDYVL) each bind S-adenosyl-L-methionine.

The protein belongs to the RNA methyltransferase TrmD family. As to quaternary structure, homodimer.

The protein resides in the cytoplasm. It carries out the reaction guanosine(37) in tRNA + S-adenosyl-L-methionine = N(1)-methylguanosine(37) in tRNA + S-adenosyl-L-homocysteine + H(+). Functionally, specifically methylates guanosine-37 in various tRNAs. The polypeptide is tRNA (guanine-N(1)-)-methyltransferase (Nocardia farcinica (strain IFM 10152)).